A 251-amino-acid polypeptide reads, in one-letter code: HTH-type transcriptional regulator UlaR (251 aa).

The region spanning 3–58 (EAQRHQILLEMLAQLGFVTVEKVVERLGISPATARRDINKLDESGKLKKVRNGAEA) is the HTH deoR-type domain. The H-T-H motif DNA-binding region spans 20–39 (VTVEKVVERLGISPATARRD).

It is found in the cytoplasm. Its function is as follows. Represses ulaG and the ulaABCDEF operon. The protein is HTH-type transcriptional regulator UlaR of Escherichia coli O127:H6 (strain E2348/69 / EPEC).